Reading from the N-terminus, the 768-residue chain is Probable beta-glucosidase M (768 aa).

An N-terminal signal peptide occupies residues 1–19 (MHAIAGLTGFLAGVSLSYA). Residues Asn-25, Asn-72, and Asn-259 are each glycosylated (N-linked (GlcNAc...) asparagine). Asp-287 is a catalytic residue. 7 N-linked (GlcNAc...) asparagine glycosylation sites follow: Asn-315, Asn-322, Asn-394, Asn-434, Asn-472, Asn-543, and Asn-651.

It belongs to the glycosyl hydrolase 3 family.

It is found in the secreted. It catalyses the reaction Hydrolysis of terminal, non-reducing beta-D-glucosyl residues with release of beta-D-glucose.. Its pathway is glycan metabolism; cellulose degradation. Beta-glucosidases are one of a number of cellulolytic enzymes involved in the degradation of cellulosic biomass. Catalyzes the last step releasing glucose from the inhibitory cellobiose. The sequence is that of Probable beta-glucosidase M (bglM) from Aspergillus flavus (strain ATCC 200026 / FGSC A1120 / IAM 13836 / NRRL 3357 / JCM 12722 / SRRC 167).